Reading from the N-terminus, the 347-residue chain is Olfactory receptor 2M2 (347 aa).

At 1–25 (MAWENQTFNSDFILLGIFNHSPPHT) the chain is on the extracellular side. N-linked (GlcNAc...) asparagine glycosylation is present at asparagine 5. Residues 26–49 (FLFFLVLGIFLVAFMGNSVMVLLI) form a helical membrane-spanning segment. Residues 50–57 (YLDTQLHT) are Cytoplasmic-facing. The helical transmembrane segment at 58 to 79 (PMYFLLSQLSLMDLMLICTTVP) threads the bilayer. The Extracellular portion of the chain corresponds to 80–100 (KMAFNYLSGSKSISMAGCVTQ). The cysteines at positions 97 and 189 are disulfide-linked. The chain crosses the membrane as a helical span at residues 101–120 (IFFYISLSGSECFLLAVMAY). Over 121 to 139 (DRYIAICHPLRYTNLMNPK) the chain is Cytoplasmic. The chain crosses the membrane as a helical span at residues 140–158 (ICGLMATFSWILGSTDGII). Residues 159 to 195 (DAVATFSFSFCGSREIAHFFCEFPSLLILSCNDTSIF) lie on the Extracellular side of the membrane. N-linked (GlcNAc...) asparagine glycosylation occurs at asparagine 190. A helical transmembrane segment spans residues 196–219 (EEVIFICCIVMLVFPVAIIIASYA). The Cytoplasmic portion of the chain corresponds to 220 to 236 (RVILAVIHMGSGEGRCK). A helical transmembrane segment spans residues 237-259 (AFTTCSSHLMVVGMYYGAALFMY). Topologically, residues 260-272 (IRPTSDHSPTQDK) are extracellular. Residues 273–292 (MVSVFYTILTPMLNPLIYSL) traverse the membrane as a helical segment. Residues 293–347 (RNKEVTRAFMKILGKGKSESELPHKLYVLLFAKFFFLISIFFYDVKILALIMYIA) lie on the Cytoplasmic side of the membrane.

The protein belongs to the G-protein coupled receptor 1 family.

The protein localises to the cell membrane. Its function is as follows. Odorant receptor. The polypeptide is Olfactory receptor 2M2 (OR2M2) (Homo sapiens (Human)).